The sequence spans 361 residues: Phosphoserine aminotransferase (361 aa).

Residue Arg-42 participates in L-glutamate binding. Pyridoxal 5'-phosphate is bound by residues 76–77 (AR), Trp-102, Thr-153, Asp-173, and Gln-196. Position 197 is an N6-(pyridoxal phosphate)lysine (Lys-197). A pyridoxal 5'-phosphate-binding site is contributed by 238–239 (NT).

This sequence belongs to the class-V pyridoxal-phosphate-dependent aminotransferase family. SerC subfamily. In terms of assembly, homodimer. The cofactor is pyridoxal 5'-phosphate.

The protein resides in the cytoplasm. It catalyses the reaction O-phospho-L-serine + 2-oxoglutarate = 3-phosphooxypyruvate + L-glutamate. The catalysed reaction is 4-(phosphooxy)-L-threonine + 2-oxoglutarate = (R)-3-hydroxy-2-oxo-4-phosphooxybutanoate + L-glutamate. It participates in amino-acid biosynthesis; L-serine biosynthesis; L-serine from 3-phospho-D-glycerate: step 2/3. Its pathway is cofactor biosynthesis; pyridoxine 5'-phosphate biosynthesis; pyridoxine 5'-phosphate from D-erythrose 4-phosphate: step 3/5. Functionally, catalyzes the reversible conversion of 3-phosphohydroxypyruvate to phosphoserine and of 3-hydroxy-2-oxo-4-phosphonooxybutanoate to phosphohydroxythreonine. The chain is Phosphoserine aminotransferase from Yersinia pseudotuberculosis serotype IB (strain PB1/+).